A 268-amino-acid chain; its full sequence is MLIDIIRAVILGIVEGVTEFLPVSSTGHLLLAERFFNLGEGNFWKSFAVLIQLGAILAILALYFVKLWRIALGMFTDANARRFVIGVLVAFLPAAVIGAAFGGYIKHYLFNPWVVCFSLIVGGAILLWVDQLDLKPRYHDATAFPLLTYFYIGCAQCTAMIPGVSRSGASIVAAMLLGTDKRSAAEFSFFLAIPTMLGAFVYDLYKNHADMTADNLIIVAIGFVVSFITAIIVVKTFLTYVTRHGFELFAWWRVIVGTLGLIALALGL.

7 helical membrane-spanning segments follow: residues 47-67 (FAVL…FVKL), 83-103 (FVIG…AFGG), 109-129 (LFNP…LLWV), 144-164 (FPLL…IPGV), 184-204 (AAEF…VYDL), 217-237 (IIVA…VKTF), and 248-268 (LFAW…ALGL).

The protein belongs to the UppP family.

The protein resides in the cell inner membrane. It catalyses the reaction di-trans,octa-cis-undecaprenyl diphosphate + H2O = di-trans,octa-cis-undecaprenyl phosphate + phosphate + H(+). In terms of biological role, catalyzes the dephosphorylation of undecaprenyl diphosphate (UPP). Confers resistance to bacitracin. This chain is Undecaprenyl-diphosphatase, found in Rhodopseudomonas palustris (strain ATCC BAA-98 / CGA009).